The primary structure comprises 311 residues: Olfactory receptor 6B1 (311 aa).

Residues 1-25 (MELENQTRVTKFILVGFPGSLSMRA) lie on the Extracellular side of the membrane. N-linked (GlcNAc...) asparagine glycosylation is present at N5. Residues 26-46 (AMFLIFLVAYILTVAENVIII) form a helical membrane-spanning segment. Over 47–54 (LLVLQNRP) the chain is Cytoplasmic. Residues 55 to 75 (LHKPMYFFLANLSFLETWYIS) form a helical membrane-spanning segment. Residues 76-99 (VTVPKLLFSFWSVNNSISFTLCMI) are Extracellular-facing. C97 and C189 form a disulfide bridge. A helical membrane pass occupies residues 100–120 (QLYFFIALMCTECVLLAAMAY). The Cytoplasmic portion of the chain corresponds to 121–139 (DRYVAICRPLHYPTIMSHG). Residues 140 to 160 (LCFRLALGSWAIGFGISLAKI) form a helical membrane-spanning segment. Over 161–196 (YFISCLSFCGPNVINHFFCDISPVLNLSCTDMSITE) the chain is Extracellular. Residues 197–217 (LVDFILALVIFLFPLFITVLS) traverse the membrane as a helical segment. Topologically, residues 218–235 (YGCILATILCMPTGKQKA) are cytoplasmic. The chain crosses the membrane as a helical span at residues 236–256 (FSTCASHLVVVTIFYSAIIFM). Residues 257 to 269 (YARPRVIHAFNMN) are Extracellular-facing. A helical membrane pass occupies residues 270–290 (KIISIFYAIVTPSLNPFIYCL). Residues 291-311 (RNREVKEALKKLAYCQASRSD) are Cytoplasmic-facing.

Belongs to the G-protein coupled receptor 1 family.

The protein localises to the cell membrane. Its function is as follows. Odorant receptor. The protein is Olfactory receptor 6B1 (OR6B1) of Homo sapiens (Human).